A 159-amino-acid chain; its full sequence is V-type proton ATPase 16 kDa proteolipid subunit c (159 aa).

The Lumenal portion of the chain corresponds to 1–11; the sequence is MSEEGSPMYSP. Residues 12-32 traverse the membrane as a helical segment; the sequence is FFGVMGAASAMVFSALGAAYG. Residues 33–54 are Cytoplasmic-facing; sequence TAKSGVGISAMSVMRPELIMKC. Residues 55-75 form a helical membrane-spanning segment; it reads IIPVVMAGIIAIYGLVVAVLI. Residues 76-93 lie on the Lumenal side of the membrane; it reads AGKLDEAPTYTLYQGFVH. A helical transmembrane segment spans residues 94 to 114; the sequence is MGAGLSVGLSGLAAGFAIGIV. The Cytoplasmic portion of the chain corresponds to 115–132; the sequence is GDAGVRGTAQQPRLYVGM. A helical transmembrane segment spans residues 133–153; the sequence is ILILIFAEVLGLYGLIVAIFL. The Lumenal segment spans residues 154-159; it reads YTKTSS.

Belongs to the V-ATPase proteolipid subunit family. In terms of assembly, V-ATPase is a heteromultimeric enzyme made up of two complexes: the ATP-hydrolytic V1 complex and the proton translocation V0 complex. The V1 complex consists of three catalytic AB heterodimers that form a heterohexamer, three peripheral stalks each consisting of EG heterodimers, one central rotor including subunits D and F, and the regulatory subunits C and H. The proton translocation complex V0 consists of the proton transport subunit a, a ring of proteolipid subunits c9c'', rotary subunit d, subunits e and f, and two accessory subunits.

It is found in the vacuole membrane. Functionally, proton-conducting pore forming subunit of the V0 complex of vacuolar(H+)-ATPase (V-ATPase), a multisubunit enzyme composed of a peripheral complex (V1) that hydrolyzes ATP and a membrane integral complex (V0) that translocates protons. V-ATPase is responsible for acidifying and maintaining the pH of intracellular compartments and in some cell types, is targeted to the plasma membrane, where it is responsible for acidifying the extracellular environment. This chain is V-type proton ATPase 16 kDa proteolipid subunit c, found in Nephrops norvegicus (Norway lobster).